Reading from the N-terminus, the 154-residue chain is ATP synthase subunit b (154 aa).

The helical transmembrane segment at 9-29 (AIAFVIFVWFCMKYVWPPLMA) threads the bilayer.

Belongs to the ATPase B chain family. As to quaternary structure, F-type ATPases have 2 components, F(1) - the catalytic core - and F(0) - the membrane proton channel. F(1) has five subunits: alpha(3), beta(3), gamma(1), delta(1), epsilon(1). F(0) has three main subunits: a(1), b(2) and c(10-14). The alpha and beta chains form an alternating ring which encloses part of the gamma chain. F(1) is attached to F(0) by a central stalk formed by the gamma and epsilon chains, while a peripheral stalk is formed by the delta and b chains.

Its subcellular location is the cell inner membrane. In terms of biological role, f(1)F(0) ATP synthase produces ATP from ADP in the presence of a proton or sodium gradient. F-type ATPases consist of two structural domains, F(1) containing the extramembraneous catalytic core and F(0) containing the membrane proton channel, linked together by a central stalk and a peripheral stalk. During catalysis, ATP synthesis in the catalytic domain of F(1) is coupled via a rotary mechanism of the central stalk subunits to proton translocation. Its function is as follows. Component of the F(0) channel, it forms part of the peripheral stalk, linking F(1) to F(0). The sequence is that of ATP synthase subunit b from Klebsiella pneumoniae subsp. pneumoniae (strain ATCC 700721 / MGH 78578).